The following is a 212-amino-acid chain: dITP/XTP pyrophosphatase (212 aa).

Residue 7–12 (SNNAKK) coordinates substrate. Positions 39 and 68 each coordinate Mg(2+). Asp-68 acts as the Proton acceptor in catalysis. Substrate is bound by residues Ser-69, 165–168 (FGYD), Lys-188, and 193–194 (HR).

Belongs to the HAM1 NTPase family. Homodimer. Mg(2+) is required as a cofactor.

It carries out the reaction XTP + H2O = XMP + diphosphate + H(+). It catalyses the reaction dITP + H2O = dIMP + diphosphate + H(+). The catalysed reaction is ITP + H2O = IMP + diphosphate + H(+). Pyrophosphatase that catalyzes the hydrolysis of nucleoside triphosphates to their monophosphate derivatives, with a high preference for the non-canonical purine nucleotides XTP (xanthosine triphosphate), dITP (deoxyinosine triphosphate) and ITP. Seems to function as a house-cleaning enzyme that removes non-canonical purine nucleotides from the nucleotide pool, thus preventing their incorporation into DNA/RNA and avoiding chromosomal lesions. This Leptothrix cholodnii (strain ATCC 51168 / LMG 8142 / SP-6) (Leptothrix discophora (strain SP-6)) protein is dITP/XTP pyrophosphatase.